The sequence spans 309 residues: Taste receptor type 2 member 20 (309 aa).

Residues 1 to 6 are Extracellular-facing; that stretch reads MMSFLH. The chain crosses the membrane as a helical span at residues 7 to 27; sequence IVFSILVVVAFILGNFANGFI. Over 28–46 the chain is Cytoplasmic; sequence ALINFIAWVKRQKISSADQ. A helical membrane pass occupies residues 47 to 67; that stretch reads IIAALAVSRVGLLWVILLHWY. Topologically, residues 68–79 are extracellular; that stretch reads STVLNPTSSNLK. The chain crosses the membrane as a helical span at residues 80–100; sequence VIIFISNAWAVTNHFSIWLAT. The Cytoplasmic portion of the chain corresponds to 101–125; the sequence is SLSIFYLLKIVNFSRLIFHHLKRKA. A helical membrane pass occupies residues 126 to 146; that stretch reads KSVVLVIVLGSLFFLVCHLVM. At 147–178 the chain is on the extracellular side; it reads KHTYINVWTEECEGNVTWKIKLRNAMHLSNLT. N-linked (GlcNAc...) asparagine glycans are attached at residues Asn-161 and Asn-176. The helical transmembrane segment at 179-199 threads the bilayer; sequence VAMLANLIPFTLTLISFLLLI. The Cytoplasmic segment spans residues 200 to 229; it reads YSLCKHLKKMQLHGKGSQDPSTKIHIKALQ. Residues 230 to 250 traverse the membrane as a helical segment; the sequence is TVTSFLILLAIYFLCLIISFW. The Extracellular segment spans residues 251–259; the sequence is NFKMRPKEI. Residues 260 to 280 traverse the membrane as a helical segment; the sequence is VLMLCQAFGIIYPSFHSFILI. Residues 281–309 are Cytoplasmic-facing; it reads WGNKTLKQTFLSVLWQVTCWAKGQNQSTP.

Belongs to the G-protein coupled receptor T2R family. As to expression, expressed in subsets of taste receptor cells of the tongue and exclusively in gustducin-positive cells.

It localises to the membrane. Receptor that may play a role in the perception of bitterness and is gustducin-linked. May play a role in sensing the chemical composition of the gastrointestinal content. The activity of this receptor may stimulate alpha gustducin, mediate PLC-beta-2 activation and lead to the gating of TRPM5. The protein is Taste receptor type 2 member 20 (TAS2R20) of Homo sapiens (Human).